We begin with the raw amino-acid sequence, 67 residues long: Beta-defensin 103A (67 aa).

The first 22 residues, 1–22 (MRIHFLLFALLFLFLMPVPGNG), serve as a signal peptide directing secretion. Disulfide bonds link C33–C62, C40–C55, and C45–C63.

This sequence belongs to the beta-defensin family.

It localises to the secreted. Exhibits antimicrobial activity against Gram-positive and Gram-negative bacteria. The protein is Beta-defensin 103A (DEFB103A) of Equus caballus (Horse).